Reading from the N-terminus, the 98-residue chain is Co-chaperonin GroES (98 aa).

The protein belongs to the GroES chaperonin family. Heptamer of 7 subunits arranged in a ring. Interacts with the chaperonin GroEL.

Its subcellular location is the cytoplasm. Together with the chaperonin GroEL, plays an essential role in assisting protein folding. The GroEL-GroES system forms a nano-cage that allows encapsulation of the non-native substrate proteins and provides a physical environment optimized to promote and accelerate protein folding. GroES binds to the apical surface of the GroEL ring, thereby capping the opening of the GroEL channel. The chain is Co-chaperonin GroES from Rhizobium leguminosarum bv. trifolii (strain WSM2304).